The primary structure comprises 198 residues: Coagulation factor XIII A chain (198 aa).

The tract at residues 1–36 (MSESSGTAFGGRRAIPPNTSNAAENDPPTVELQGLV) is disordered. Position 2 is an N-acetylserine (Ser2). Positions 2 to 38 (SESSGTAFGGRRAIPPNTSNAAENDPPTVELQGLVPR) are cleaved as a propeptide — activation peptide.

This sequence belongs to the transglutaminase superfamily. Transglutaminase family. As to quaternary structure, tetramer of two A chains (F13A1) and two B (F13B) chains. It depends on Ca(2+) as a cofactor. In terms of processing, the activation peptide is released by thrombin.

Its subcellular location is the cytoplasm. The protein localises to the secreted. It carries out the reaction L-glutaminyl-[protein] + L-lysyl-[protein] = [protein]-L-lysyl-N(6)-5-L-glutamyl-[protein] + NH4(+). In terms of biological role, factor XIII is activated by thrombin and calcium ion to a transglutaminase that catalyzes the formation of gamma-glutamyl-epsilon-lysine cross-links between fibrin chains, thus stabilizing the fibrin clot. Also cross-link alpha-2-plasmin inhibitor, or fibronectin, to the alpha chains of fibrin. The chain is Coagulation factor XIII A chain (F13A1) from Bos taurus (Bovine).